A 163-amino-acid chain; its full sequence is Large ribosomal subunit protein uL10 (163 aa).

The protein belongs to the universal ribosomal protein uL10 family. Part of the ribosomal stalk of the 50S ribosomal subunit. The N-terminus interacts with L11 and the large rRNA to form the base of the stalk. The C-terminus forms an elongated spine to which L12 dimers bind in a sequential fashion forming a multimeric L10(L12)X complex.

Functionally, forms part of the ribosomal stalk, playing a central role in the interaction of the ribosome with GTP-bound translation factors. This chain is Large ribosomal subunit protein uL10, found in Haemophilus influenzae (strain PittGG).